Here is a 483-residue protein sequence, read N- to C-terminus: V-type proton ATPase subunit H (483 aa).

2 positions are modified to phosphoserine: Ser59 and Ser483.

This sequence belongs to the V-ATPase H subunit family. As to quaternary structure, V-ATPase is a heteromultimeric enzyme made up of two complexes: the ATP-hydrolytic V1 complex and the proton translocation V0 complex. The V1 complex consists of three catalytic AB heterodimers that form a heterohexamer, three peripheral stalks each consisting of EG heterodimers, one central rotor including subunits D and F, and the regulatory subunits C and H. The proton translocation complex V0 consists of the proton transport subunit a, a ring of proteolipid subunits c9c'', rotary subunit d, subunits e and f, and the accessory subunits ATP6AP1/Ac45 and ATP6AP2/PRR. Interacts with AP2M1.

The protein localises to the cytoplasmic vesicle. The protein resides in the clathrin-coated vesicle membrane. Functionally, subunit of the V1 complex of vacuolar(H+)-ATPase (V-ATPase), a multisubunit enzyme composed of a peripheral complex (V1) that hydrolyzes ATP and a membrane integral complex (V0) that translocates protons. V-ATPase is responsible for acidifying and maintaining the pH of intracellular compartments and in some cell types, is targeted to the plasma membrane, where it is responsible for acidifying the extracellular environment. Subunit H is essential for V-ATPase activity, but not for the assembly of the complex. Involved in the endocytosis mediated by clathrin-coated pits, required for the formation of endosomes. The sequence is that of V-type proton ATPase subunit H (Atp6v1h) from Mus musculus (Mouse).